Here is a 123-residue protein sequence, read N- to C-terminus: DNA-directed RNA polymerase I subunit RPA12 (123 aa).

Residues Cys-17, Cys-20, Cys-35, Cys-38, Cys-84, and Cys-87 each coordinate Zn(2+). The segment at 17 to 38 (CPDCGSVLPLPGIQDTVICSRC) adopts a C4-type zinc-finger fold. Residues 80–120 (IDRRCPRCGHEGMAYHTRQMRSADEGQTVFYTCINCKFQEK) form a TFIIS-type zinc finger. The Hairpin signature appears at 103 to 104 (DE). Residues Cys-112 and Cys-115 each coordinate Zn(2+).

The protein belongs to the archaeal RpoM/eukaryotic RPA12/RPB9/RPC11 RNA polymerase family. Component of the RNA polymerase I (Pol I) complex consisting of 13 subunits: a ten-subunit catalytic core composed of POLR1A/RPA1, POLR1B/RPA2, POLR1C/RPAC1, POLR1D/RPAC2, POLR1H/RPA12, POLR2E/RPABC1, POLR2F/RPABC2, POLR2H/RPABC3, POLR2K/RPABC4 and POLR2L/RPABC5; a mobile stalk subunit POLR1F/RPA43 protruding from the core and additional subunits homologous to general transcription factors POLR1E/RPA49 and POLR1G/RPA34. Part of Pol I pre-initiation complex (PIC), in which Pol I core assembles with RRN3 and promoter-bound UTBF and SL1/TIF-IB complex.

It is found in the nucleus. The protein resides in the nucleolus. Core component of RNA polymerase I (Pol I), a DNA-dependent RNA polymerase which synthesizes ribosomal RNA precursors using the four ribonucleoside triphosphates as substrates. Can mediate Pol I proofreading of the nascent RNA transcript. Anchors into the Pol I active site to monitor transcription fidelity and cleave mis-incorporated 5'-ribonucleotides. The chain is DNA-directed RNA polymerase I subunit RPA12 from Mus musculus (Mouse).